The primary structure comprises 508 residues: Early growth response protein 1 (508 aa).

Disordered regions lie at residues 18 to 78 (PQFL…ESFS) and 136 to 210 (MTNP…QYPP). Low complexity predominate over residues 33–42 (NNSSSSSSSS). The segment covering 43–52 (SGGGGGGGSN) has biased composition (gly residues). The segment covering 139-164 (PPTSSSSAPSPAASSSSSASQSPPLS) has biased composition (low complexity). Lysine 278 is covalently cross-linked (Glycyl lysine isopeptide (Lys-Gly) (interchain with G-Cter in SUMO2)). Residues 292–311 (SRMRKYPNRPSKTPPHERPY) form a disordered region. 3 C2H2-type zinc fingers span residues 311 to 335 (YACP…IRIH), 341 to 363 (FQCR…IRTH), and 369 to 391 (FACD…TKIH). The tract at residues 382–453 (DERKRHTKIH…SSTYPSPAHS (72 aa)) is disordered. Residues 386 to 396 (RHTKIHLRQKD) are compositionally biased toward basic residues. Residues 402-450 (SVVASSAASSLSSYPSPVATSYPSPATTSFPSPVPTSYSSPGSSTYPSP) show a composition bias toward low complexity. Tandem repeats lie at residues 413-420 (SSYPSPVA), 421-428 (TSYPSPAT), 429-436 (TSFPSPVP), 437-444 (TSYSSPGS), 445-452 (STYPSPAH), 453-460 (SGFPSPSV), and 462-468 (TTYASVP). The tract at residues 413–468 (SSYPSPVATSYPSPATTSFPSPVPTSYSSPGSSTYPSPAHSGFPSPSVATTYASVP) is 7 X 8 AA tandem repeats of [TS](2)-[FY]-[PS]-S-P-[GSAV]-X.

The protein belongs to the EGR C2H2-type zinc-finger protein family. Interacts with SNAI1 and SP1 upon 12-O-tetradecanoylphorbol-13-acetate (TPA) induction. Detected in kidney thick ascending limbs and collecting ducts (at protein level).

It localises to the nucleus. The protein resides in the cytoplasm. Transcriptional regulator. Recognizes and binds to the DNA sequence 5'-GCG(T/G)GGGCG-3'(EGR-site) in the promoter region of target genes. Binds double-stranded target DNA, irrespective of the cytosine methylation status. Regulates the transcription of numerous target genes, and thereby plays an important role in regulating the response to growth factors, DNA damage, and ischemia. Plays a role in the regulation of cell survival, proliferation and cell death. Activates expression of p53/TP53 and TGFB1, and thereby helps prevent tumor formation. Required for normal progress through mitosis and normal proliferation of hepatocytes after partial hepatectomy. Mediates responses to ischemia and hypoxia; regulates the expression of proteins such as IL1B and CXCL2 that are involved in inflammatory processes and development of tissue damage after ischemia. Regulates biosynthesis of luteinizing hormone (LHB) in the pituitary. Regulates the amplitude of the expression rhythms of clock genes: BMAL1, PER2 and NR1D1 in the liver via the activation of PER1 (clock repressor) transcription. Regulates the rhythmic expression of core-clock gene BMAL1 in the suprachiasmatic nucleus (SCN). Regulates biosynthesis of glucocorticoid receptor GR/NR3C1 in the hippocampus and thereby may play a role in the behavioral and hypothalamic-pituitary-adrenal responses to stress in offspring. The sequence is that of Early growth response protein 1 (Egr1) from Rattus norvegicus (Rat).